A 340-amino-acid polypeptide reads, in one-letter code: Anthranilate phosphoribosyltransferase (340 aa).

5-phospho-alpha-D-ribose 1-diphosphate contacts are provided by residues glycine 79, 82 to 83, threonine 87, 89 to 92, 107 to 115, and serine 119; these read GD, NIST, and KHGNRAVTG. Anthranilate is bound at residue glycine 79. Position 91 (serine 91) interacts with Mg(2+). Asparagine 110 is a binding site for anthranilate. Arginine 165 lines the anthranilate pocket. Mg(2+) is bound by residues aspartate 224 and glutamate 225.

Belongs to the anthranilate phosphoribosyltransferase family. Homodimer. Mg(2+) serves as cofactor.

It catalyses the reaction N-(5-phospho-beta-D-ribosyl)anthranilate + diphosphate = 5-phospho-alpha-D-ribose 1-diphosphate + anthranilate. It participates in amino-acid biosynthesis; L-tryptophan biosynthesis; L-tryptophan from chorismate: step 2/5. In terms of biological role, catalyzes the transfer of the phosphoribosyl group of 5-phosphorylribose-1-pyrophosphate (PRPP) to anthranilate to yield N-(5'-phosphoribosyl)-anthranilate (PRA). The chain is Anthranilate phosphoribosyltransferase from Syntrophomonas wolfei subsp. wolfei (strain DSM 2245B / Goettingen).